We begin with the raw amino-acid sequence, 215 residues long: Adenylate kinase (215 aa).

An ATP-binding site is contributed by 10–15; the sequence is GAGKGT. An NMP region spans residues 30 to 59; sequence STGDILRANVRDGTKLGKEAKGYMDKGELV. AMP-binding positions include threonine 31, arginine 36, 57–59, 85–88, and glutamine 92; these read ELV and GYPR. The tract at residues 126–162 is LID; that stretch reads GRYVCTCGESYHMKFNPPKKENVCDACGADLYQRDDD. Arginine 127 contacts ATP. The Zn(2+) site is built by cysteine 130 and cysteine 132. Position 135–136 (135–136) interacts with ATP; that stretch reads SY. Residues cysteine 149 and cysteine 152 each contribute to the Zn(2+) site. The AMP site is built by arginine 159 and arginine 170. Glycine 198 is a binding site for ATP.

The protein belongs to the adenylate kinase family. As to quaternary structure, monomer.

It localises to the cytoplasm. The enzyme catalyses AMP + ATP = 2 ADP. The protein operates within purine metabolism; AMP biosynthesis via salvage pathway; AMP from ADP: step 1/1. Catalyzes the reversible transfer of the terminal phosphate group between ATP and AMP. Plays an important role in cellular energy homeostasis and in adenine nucleotide metabolism. The polypeptide is Adenylate kinase (Methanococcoides burtonii (strain DSM 6242 / NBRC 107633 / OCM 468 / ACE-M)).